We begin with the raw amino-acid sequence, 1012 residues long: MLIKRRAFLKLTAAGATLSAFGGLGVDLAPAKAQAATMALKTVDAKQTTSVCCYCSVGCGLIVHTDKKTNRAINVEGDPDHPINEGSLCAKGASTWQLAENERRPANPLYRAPGSDQWEEKSWDWMLDTIAERVAKTREATFVTKNAKGQVVNRCDGIASVGSAAMDNEECWIYQAWLRSLGLFYIEHQARIUHSATVAALAESYGRGAMTNHWIDLKNSDVILMMGSNPAENHPISFKWVMRAKDKGATLIHVDPRYTRTSTKCDLYAPLRSGSDIAFLNGMTKYILEKELYFKDYVVNYTNASFIVGEGFAFEEGLFAGYNKETRKYDKSKWGFERDENGNPKRDETLKHPRCVFQIMKKHYERYDLDKISAICGTPKELILKVYDAYCATGKPDKAGTIMYAMGWTQHTVGVQNIRAMSINQLLLGNIGVAGGGVNALRGEANVQGSTDHGLLMHIYPGYLGTARASIPTYEEYTKKFTPVSKDPQSANWWSNFPKYSASYIKSMWPDADLNEAYGYLPKGEDGKDYSWLTLFDDMFQGKIKGFFAWGQNPACSGANSNKTREALTKLDWMVNVNIFDNETGSFWRGPDMDPKKIKTEVFFLPCAVAIEKEGSISNSGRWMQWRYVGPEPRKNAIPDGDLIVELAKRVQKLLAKTPGKLAAPVTKLKTDYWVNDHGHFDPHKIAKLINGFALKDFKVGDVEYKAGQQIATFGHLQADGSTTSGCWIYTGSYTEKGNMAARRDKTQTDMQAKIGLYPGWTWAWPVNRRIIYNRASVDLNGKPYAPEKAVVEWNAAEKKWVGDVPDGPWPPQADKEKGKRAFIMKPEGYAYLYGPGREDGPLPEYYEPMECPVIEHPFSKTLHNPTALHFATEEKAVCDPRYPFICSTYRVTEHWQTGLMTRNTPWLLEAEPQMFCEMSEELATLRGIKNGDKVILESVRGKLWAKAIITKRIKPFAIQGQQVHMVGIPWHYGWSFPKNGGDAANILTPSVGDPNTGIPETKAFMVNVTKA.

The segment at residues 1–35 (MLIKRRAFLKLTAAGATLSAFGGLGVDLAPAKAQA) is a signal peptide (tat-type signal). Positions 45-103 (AKQTTSVCCYCSVGCGLIVHTDKKTNRAINVEGDPDHPINEGSLCAKGASTWQLAENER) constitute a 4Fe-4S Mo/W bis-MGD-type domain. [4Fe-4S] cluster contacts are provided by Cys-52, Cys-55, Cys-59, and Cys-89. Sec-193 is a binding site for W-bis(molybdopterin guanine dinucleotide). Residue Sec-193 is a non-standard amino acid, selenocysteine. Ca(2+)-binding residues include Thr-393, Lys-395, Lys-398, Leu-428, and Asn-430. A disulfide bond links Cys-852 and Cys-879.

Belongs to the prokaryotic molybdopterin-containing oxidoreductase family. In terms of assembly, heterodimer of alpha (FdhA) and beta (FdhB) subunits. It depends on [4Fe-4S] cluster as a cofactor. W-bis(molybdopterin guanine dinucleotide) is required as a cofactor. The disulfide bond is likely to be broken in the active form of this enzyme. In terms of processing, predicted to be exported by the Tat system. The position of the signal peptide cleavage has been experimentally proven.

Its subcellular location is the periplasm. The catalysed reaction is formate + NAD(+) = CO2 + NADH. Its function is as follows. Alpha chain of the formate dehydrogenase (FDH) catalyze the reversible two-electron oxidation of formate to carbon dioxide. FDH loses activity in the presence of air, but this activity can be restored. The alpha subunit of formate dehydrogenase forms the active site. This is Formate dehydrogenase subunit alpha from Megalodesulfovibrio gigas (Desulfovibrio gigas).